Consider the following 240-residue polypeptide: Ubiquinone biosynthesis O-methyltransferase (240 aa).

Positions 44, 64, 85, and 129 each coordinate S-adenosyl-L-methionine.

Belongs to the methyltransferase superfamily. UbiG/COQ3 family.

The catalysed reaction is a 3-demethylubiquinol + S-adenosyl-L-methionine = a ubiquinol + S-adenosyl-L-homocysteine + H(+). It carries out the reaction a 3-(all-trans-polyprenyl)benzene-1,2-diol + S-adenosyl-L-methionine = a 2-methoxy-6-(all-trans-polyprenyl)phenol + S-adenosyl-L-homocysteine + H(+). Its pathway is cofactor biosynthesis; ubiquinone biosynthesis. In terms of biological role, O-methyltransferase that catalyzes the 2 O-methylation steps in the ubiquinone biosynthetic pathway. The polypeptide is Ubiquinone biosynthesis O-methyltransferase (Escherichia coli (strain ATCC 8739 / DSM 1576 / NBRC 3972 / NCIMB 8545 / WDCM 00012 / Crooks)).